The following is a 26-amino-acid chain: uncharacterized protein (26 aa).

It localises to the plastid. Its subcellular location is the chloroplast. This is an uncharacterized protein from Trieres chinensis (Marine centric diatom).